Reading from the N-terminus, the 89-residue chain is Small ribosomal subunit protein uS15 (89 aa).

The protein belongs to the universal ribosomal protein uS15 family. As to quaternary structure, part of the 30S ribosomal subunit. Forms a bridge to the 50S subunit in the 70S ribosome, contacting the 23S rRNA.

One of the primary rRNA binding proteins, it binds directly to 16S rRNA where it helps nucleate assembly of the platform of the 30S subunit by binding and bridging several RNA helices of the 16S rRNA. Functionally, forms an intersubunit bridge (bridge B4) with the 23S rRNA of the 50S subunit in the ribosome. In Synechocystis sp. (strain ATCC 27184 / PCC 6803 / Kazusa), this protein is Small ribosomal subunit protein uS15.